A 102-amino-acid chain; its full sequence is Small ribosomal subunit protein uS10 (102 aa).

This sequence belongs to the universal ribosomal protein uS10 family. As to quaternary structure, part of the 30S ribosomal subunit.

In terms of biological role, involved in the binding of tRNA to the ribosomes. This Cereibacter sphaeroides (strain ATCC 17029 / ATH 2.4.9) (Rhodobacter sphaeroides) protein is Small ribosomal subunit protein uS10.